A 91-amino-acid chain; its full sequence is UPF0223 protein SAB0963 (91 aa).

The protein belongs to the UPF0223 family.

In Staphylococcus aureus (strain bovine RF122 / ET3-1), this protein is UPF0223 protein SAB0963.